A 74-amino-acid polypeptide reads, in one-letter code: Anionic peptide clone 8 (74 aa).

Residues 1–24 (MVSKSLIVLLLVSVLVSTFFTTEA) form the signal peptide.

Belongs to the non-disulfide-bridged peptide (NDBP) superfamily. Long chain multifunctional peptide (group 2) family. As to expression, expressed by the venom gland.

It is found in the secreted. In terms of biological role, may be an antimicrobial peptide. In Tityus costatus (Brazilian scorpion), this protein is Anionic peptide clone 8.